The sequence spans 338 residues: Solute carrier family 35 member G5 (338 aa).

Residues 1–21 (MAGSHPYFNLPDSTHPSPPSA) are disordered. Transmembrane regions (helical) follow at residues 37 to 57 (TNGL…VGPL), 67 to 87 (LPSL…ALPL), 105 to 125 (CFCA…VQVV), 160 to 180 (CGLL…LWTL), 190 to 210 (ALGY…LLVY), 221 to 241 (TVAF…LFVL), 250 to 270 (LLSW…FTCV), 281 to 301 (LVCA…YYVL), and 305 to 325 (VAPF…IITA). An EamA 1 domain is found at 49–174 (LPAGFVGPLS…SILGLIIIVG (126 aa)). The EamA 2 domain maps to 272-325 (YAVTKAHPALVCAVLHSEVVVALILQYYVLHETVAPFDITGAGIVLGSIAIITA).

Belongs to the SLC35G solute transporter family.

It localises to the membrane. This is Solute carrier family 35 member G5 (SLC35G5) from Pan paniscus (Pygmy chimpanzee).